Here is a 256-residue protein sequence, read N- to C-terminus: Imidazole glycerol phosphate synthase subunit HisF (256 aa).

Catalysis depends on residues aspartate 13 and aspartate 132.

Belongs to the HisA/HisF family. Heterodimer of HisH and HisF.

It localises to the cytoplasm. The enzyme catalyses 5-[(5-phospho-1-deoxy-D-ribulos-1-ylimino)methylamino]-1-(5-phospho-beta-D-ribosyl)imidazole-4-carboxamide + L-glutamine = D-erythro-1-(imidazol-4-yl)glycerol 3-phosphate + 5-amino-1-(5-phospho-beta-D-ribosyl)imidazole-4-carboxamide + L-glutamate + H(+). It functions in the pathway amino-acid biosynthesis; L-histidine biosynthesis; L-histidine from 5-phospho-alpha-D-ribose 1-diphosphate: step 5/9. Its function is as follows. IGPS catalyzes the conversion of PRFAR and glutamine to IGP, AICAR and glutamate. The HisF subunit catalyzes the cyclization activity that produces IGP and AICAR from PRFAR using the ammonia provided by the HisH subunit. The protein is Imidazole glycerol phosphate synthase subunit HisF of Leptospira interrogans serogroup Icterohaemorrhagiae serovar copenhageni (strain Fiocruz L1-130).